We begin with the raw amino-acid sequence, 72 residues long: DNA-directed RNA polymerase subunit omega (72 aa).

The protein belongs to the RNA polymerase subunit omega family. As to quaternary structure, the RNAP catalytic core consists of 2 alpha, 1 beta, 1 beta' and 1 omega subunit. When a sigma factor is associated with the core the holoenzyme is formed, which can initiate transcription.

The catalysed reaction is RNA(n) + a ribonucleoside 5'-triphosphate = RNA(n+1) + diphosphate. In terms of biological role, promotes RNA polymerase assembly. Latches the N- and C-terminal regions of the beta' subunit thereby facilitating its interaction with the beta and alpha subunits. This chain is DNA-directed RNA polymerase subunit omega, found in Clostridium beijerinckii (strain ATCC 51743 / NCIMB 8052) (Clostridium acetobutylicum).